The following is a 155-amino-acid chain: Small ribosomal subunit protein uS7 (155 aa).

It belongs to the universal ribosomal protein uS7 family. As to quaternary structure, part of the 30S ribosomal subunit. Contacts proteins S9 and S11.

Its function is as follows. One of the primary rRNA binding proteins, it binds directly to 16S rRNA where it nucleates assembly of the head domain of the 30S subunit. Is located at the subunit interface close to the decoding center, probably blocks exit of the E-site tRNA. The polypeptide is Small ribosomal subunit protein uS7 (Helicobacter acinonychis (strain Sheeba)).